Consider the following 391-residue polypeptide: Elongation factor Tu (391 aa).

The region spanning 10–201 (KPHVNIGTIG…AVDEYIPTPA (192 aa)) is the tr-type G domain. The segment at 19–26 (GHVDHGKT) is G1. Position 19 to 26 (19 to 26 (GHVDHGKT)) interacts with GTP. Thr26 is a Mg(2+) binding site. The G2 stretch occupies residues 55–59 (GITIS). The G3 stretch occupies residues 76–79 (DCPG). Residues 76–80 (DCPGH) and 131–134 (NKVD) each bind GTP. Positions 131–134 (NKVD) are G4. The segment at 169 to 171 (SAL) is G5.

The protein belongs to the TRAFAC class translation factor GTPase superfamily. Classic translation factor GTPase family. EF-Tu/EF-1A subfamily. Monomer.

It is found in the cytoplasm. The enzyme catalyses GTP + H2O = GDP + phosphate + H(+). Functionally, GTP hydrolase that promotes the GTP-dependent binding of aminoacyl-tRNA to the A-site of ribosomes during protein biosynthesis. This Cereibacter sphaeroides (strain ATCC 17029 / ATH 2.4.9) (Rhodobacter sphaeroides) protein is Elongation factor Tu.